Reading from the N-terminus, the 24-residue chain is Tryptophanase operon leader peptide (24 aa).

The protein is Tryptophanase operon leader peptide (tnaL) of Escherichia coli O157:H7.